The primary structure comprises 377 residues: MHVLVLGAGQLARMMSLAGAPLNIQISAYDVTTGDVVHPLTLHLLGHGLEQAIEHVDVITAEFEHIPHDILAICQASGKFLPSSEAIKAGGDRRLEKTLLDHAGVRNANYYVIETREDFNKAIEHVGIPMVLKSALGGYDGRGQWRLKDAAQIETLWQEMAACIAATPTQAIVAEEFVPFQREVSLIGARGKEGQIEVYPLAENIHVNGVLSLSTAIDSPDLQEQAKHMFTAVAETLNYVGVLALEFFDVDGQLLVNEIAPRVHNSGHWTQQGAETCQFENHLRAVCGLPLGSTKLVRETSMINILGEDTLPASVMAMDGCHIHWYGKEKRAGRKMGHINVCGDYSGELQRRLCALANVLDEKAFPAVHEFAKKWQA.

Residues R93, K133, 138 to 144, 175 to 178, E183, H206, and 257 to 258 contribute to the ATP site; these read GYDGRGQ, EEFV, and NE. The ATP-grasp domain occupies 97-287; it reads KTLLDHAGVR…QFENHLRAVC (191 aa).

This sequence belongs to the PurK/PurT family. Homodimer.

The enzyme catalyses 5-amino-1-(5-phospho-beta-D-ribosyl)imidazole + hydrogencarbonate + ATP = 5-carboxyamino-1-(5-phospho-D-ribosyl)imidazole + ADP + phosphate + 2 H(+). The protein operates within purine metabolism; IMP biosynthesis via de novo pathway; 5-amino-1-(5-phospho-D-ribosyl)imidazole-4-carboxylate from 5-amino-1-(5-phospho-D-ribosyl)imidazole (N5-CAIR route): step 1/2. Its function is as follows. Catalyzes the ATP-dependent conversion of 5-aminoimidazole ribonucleotide (AIR) and HCO(3)(-) to N5-carboxyaminoimidazole ribonucleotide (N5-CAIR). This is N5-carboxyaminoimidazole ribonucleotide synthase from Vibrio vulnificus (strain YJ016).